Here is a 204-residue protein sequence, read N- to C-terminus: Large ribosomal subunit protein eL15 (204 aa).

The protein belongs to the eukaryotic ribosomal protein eL15 family.

The chain is Large ribosomal subunit protein eL15 (RpL15) from Anopheles gambiae (African malaria mosquito).